A 481-amino-acid polypeptide reads, in one-letter code: Abl interactor 1 (481 aa).

Residue Ala2 is modified to N-acetylalanine. Residues 18 to 79 are required for binding to WASF1; sequence ALIESYQNLT…NNVLQLLDIQ (62 aa). A t-SNARE coiled-coil homology domain is found at 45 to 107; it reads KALEETKAYT…DIHKEKVARR (63 aa). Position 53 is a phosphotyrosine (Tyr53). The tract at residues 158–285 is disordered; that stretch reads AKHGNNQPAR…PGAAPGSQYG (128 aa). Positions 161–175 are enriched in polar residues; sequence GNNQPARTGTLSRTN. A phosphothreonine mark is found at Thr174 and Thr178. Phosphoserine is present on residues Ser183 and Ser187. A Phosphotyrosine modification is found at Tyr213. Thr215 bears the Phosphothreonine mark. Residues Ser216, Ser222, and Ser225 each carry the phosphoserine modification. Over residues 222–235 the composition is skewed to polar residues; the sequence is SQHSPGRTASLNQR. Composition is skewed to low complexity over residues 248 to 258 and 272 to 282; these read SRENSGSSSIG and GPAAPGAAPGS. Residues Ser292 and Ser296 each carry the phosphoserine modification. Disordered regions lie at residues 318–348 and 361–392; these read AQPHVNGGPLYSQNSISVAPPPPPMPQLTPQ and NIADSPTPPPPPPPDDIPMFDDSPPPPPPPPV. 2 stretches are compositionally biased toward pro residues: residues 366–376 and 383–392; these read PTPPPPPPPDD and SPPPPPPPPV. The SH3 domain occupies 419–478; it reads NYIEKVVAIYDYTKDKDDELSFKEGAIIYVIKKNDDGWFEGVCNRVTGLFPGNYVESIMH. Tyr428 is subject to Phosphotyrosine. Position 439 is a phosphoserine (Ser439). Thr480 is subject to Phosphothreonine.

Belongs to the ABI family. In terms of assembly, interacts with ENAH, Abelson murine leukemia virus V-ABL, ABL1, STX1A, SNAP25, VAMP2, and through its N-terminus with WASF1. Part of a complex consisting of ABI1, STX1A and SNAP25. Part of a complex consisting of ABI1, EPS8 and SOS1. Interacts with EPS8, SOS1, SOS2, GRB2, SPTA1, and the first SH3 domain of NCK1. Component of the WAVE2 complex composed of ABI1, CYFIP1/SRA1, NCKAP1/NAP1 (NCKAP1l/HEM1 in hematopoietic cells) and WASF2/WAVE2. Interacts (via SH3 domain) with SHANK2 and SHANK3, but not SHANK1; the interaction is direct. Interacts with the heterodimer MYC:MAX; the interaction may enhance MYC:MAX transcriptional activity. Interacts with FNBP1L (via the SH3 domain), WASF2, and CDC42, but only in the presence of FNBP1L. In terms of processing, phosphorylated on tyrosine residues after serum stimulation or induction by v-Abl. Seems to be phosphorylated at Tyr-53 by ABL1, required for nuclear but not for synaptic localization. In terms of tissue distribution, widely expressed with highest levels in bone marrow, spleen, brain, testes, and embryonic brain. In adult brain prominently expressed in the neocortex, hippocampus and dentate gyrus.

It is found in the cytoplasm. Its subcellular location is the nucleus. The protein resides in the cell projection. It localises to the lamellipodium. The protein localises to the filopodium. It is found in the growth cone. Its subcellular location is the postsynaptic density. The protein resides in the cytoskeleton. May act in negative regulation of cell growth and transformation by interacting with nonreceptor tyrosine kinases ABL1 and/or ABL2. In vitro, at least isoform 2 and isoform 4 suppress the transforming activity of Abelson murine leukemia virus (v-Abl) after overexpression in fibroblasts. May play a role in regulation EGF-induced Erk pathway activation. Involved in cytoskeletal reorganization and EGFR signaling. Together with EPS8 participates in transduction of signals from Ras to Rac. In vitro, a trimeric complex of ABI1, EPS8 and SOS1 exhibits Rac specific guanine nucleotide exchange factor (GEF) activity and ABI1 seems to act as an adapter in the complex. Regulates ABL1/c-Abl-mediated phosphorylation of ENAH. Recruits WASF1 to lamellipodia and there seems to regulate WASF1 protein level. In brain, seems to regulate the dendritic outgrowth and branching as well as to determine the shape and number of synaptic contacts of developing neurons. The polypeptide is Abl interactor 1 (Mus musculus (Mouse)).